The following is a 793-amino-acid chain: Copalyl diphosphate synthase CPS1, chloroplastic (793 aa).

A chloroplast-targeting transit peptide spans 1 to 59 (MASLSSTILSRSPAARRRITPASAKLHRPECFATSAWMGSSSKNLSLSYQLNHKKISVA). Lys-238 provides a ligand contact to substrate. Residues Asp-370 and Asp-372 each coordinate Mg(2+). The DXDD motif signature appears at 370–373 (DIDD). Residue Lys-457 participates in substrate binding.

Belongs to the terpene synthase family. Mg(2+) is required as a cofactor.

The protein localises to the plastid. It localises to the chloroplast. The enzyme catalyses (2E,6E,10E)-geranylgeranyl diphosphate = (+)-copalyl diphosphate. It participates in secondary metabolite biosynthesis; terpenoid biosynthesis. Functionally, involved in tanshinone biosynthesis in hairy roots. Catalyzes the conversion of geranylgeranyl diphosphate (GGPP) to copalyl diphosphate (CPP). The protein is Copalyl diphosphate synthase CPS1, chloroplastic of Salvia miltiorrhiza (Chinese sage).